The primary structure comprises 275 residues: Putative carbamate hydrolase RutD (275 aa).

In terms of domain architecture, AB hydrolase-1 spans 15 to 116; sequence TVVLSSGLGG…SLVVINGWTV (102 aa).

The protein belongs to the AB hydrolase superfamily. Hydrolase RutD family.

The catalysed reaction is carbamate + 2 H(+) = NH4(+) + CO2. Its function is as follows. Involved in pyrimidine catabolism. May facilitate the hydrolysis of carbamate, a reaction that can also occur spontaneously. In Pantoea ananatis (strain LMG 20103), this protein is Putative carbamate hydrolase RutD.